The chain runs to 146 residues: UPF0178 protein BCG9842_B2187 (146 aa).

The protein belongs to the UPF0178 family.

The protein is UPF0178 protein BCG9842_B2187 of Bacillus cereus (strain G9842).